Here is a 74-residue protein sequence, read N- to C-terminus: Cytochrome c oxidase subunit 6C (74 aa).

The Mitochondrial matrix portion of the chain corresponds to 2-12 (STALAKPQMRG). The chain crosses the membrane as a helical span at residues 13–53 (LLARRLRFHIVGAFMVSLGFATFYKFAVAEKRKKAYADFYR). At 54-74 (NYDSMKDFEEMRKAGIFQSAK) the chain is on the mitochondrial intermembrane side.

The protein belongs to the cytochrome c oxidase subunit 6c family. Component of the cytochrome c oxidase (complex IV, CIV), a multisubunit enzyme composed of 14 subunits. The complex is composed of a catalytic core of 3 subunits MT-CO1, MT-CO2 and MT-CO3, encoded in the mitochondrial DNA, and 11 supernumerary subunits COX4I1 (or COX4I2), COX5A, COX5B, COX6A2 (or COX6A1), COX6B1 (or COX6B2), COX6C, COX7A1 (or COX7A2), COX7B, COX7C, COX8B and NDUFA4, which are encoded in the nuclear genome. The complex exists as a monomer or a dimer and forms supercomplexes (SCs) in the inner mitochondrial membrane with NADH-ubiquinone oxidoreductase (complex I, CI) and ubiquinol-cytochrome c oxidoreductase (cytochrome b-c1 complex, complex III, CIII), resulting in different assemblies (supercomplex SCI(1)III(2)IV(1) and megacomplex MCI(2)III(2)IV(2)).

The protein resides in the mitochondrion inner membrane. The protein operates within energy metabolism; oxidative phosphorylation. Its function is as follows. Component of the cytochrome c oxidase, the last enzyme in the mitochondrial electron transport chain which drives oxidative phosphorylation. The respiratory chain contains 3 multisubunit complexes succinate dehydrogenase (complex II, CII), ubiquinol-cytochrome c oxidoreductase (cytochrome b-c1 complex, complex III, CIII) and cytochrome c oxidase (complex IV, CIV), that cooperate to transfer electrons derived from NADH and succinate to molecular oxygen, creating an electrochemical gradient over the inner membrane that drives transmembrane transport and the ATP synthase. Cytochrome c oxidase is the component of the respiratory chain that catalyzes the reduction of oxygen to water. Electrons originating from reduced cytochrome c in the intermembrane space (IMS) are transferred via the dinuclear copper A center (CU(A)) of subunit 2 and heme A of subunit 1 to the active site in subunit 1, a binuclear center (BNC) formed by heme A3 and copper B (CU(B)). The BNC reduces molecular oxygen to 2 water molecules using 4 electrons from cytochrome c in the IMS and 4 protons from the mitochondrial matrix. This is Cytochrome c oxidase subunit 6C (COX6C) from Bos taurus (Bovine).